Here is a 282-residue protein sequence, read N- to C-terminus: Pantothenate synthetase (282 aa).

An ATP-binding site is contributed by 30–37 (MGYLHEGH). Catalysis depends on His37, which acts as the Proton donor. Residue Gln61 participates in (R)-pantoate binding. Gln61 contacts beta-alanine. 147–150 (GMKD) provides a ligand contact to ATP. Residue Gln153 participates in (R)-pantoate binding. Residues Val176 and 184-187 (KSSR) each bind ATP.

It belongs to the pantothenate synthetase family. As to quaternary structure, homodimer.

It localises to the cytoplasm. It carries out the reaction (R)-pantoate + beta-alanine + ATP = (R)-pantothenate + AMP + diphosphate + H(+). Its pathway is cofactor biosynthesis; (R)-pantothenate biosynthesis; (R)-pantothenate from (R)-pantoate and beta-alanine: step 1/1. Functionally, catalyzes the condensation of pantoate with beta-alanine in an ATP-dependent reaction via a pantoyl-adenylate intermediate. This Bacillus cytotoxicus (strain DSM 22905 / CIP 110041 / 391-98 / NVH 391-98) protein is Pantothenate synthetase.